Reading from the N-terminus, the 601-residue chain is DNA topoisomerase I, mitochondrial (601 aa).

The N-terminal 50 residues, 1–50, are a transit peptide targeting the mitochondrion; it reads MRVVRLLRLRAALTLLGEVPRRPASRGVPGSRRTQKGSGARWEKEKHEDG. The interval 22-48 is disordered; the sequence is RPASRGVPGSRRTQKGSGARWEKEKHE. Interaction with DNA regions lie at residues 261–262, 324–329, and 421–423; these read KY, RAGNEK, and TAK. A Topo IB-type catalytic domain is found at 268 to 601; the sequence is CSKLKGETAW…LAMAGEDFEF (334 aa). Residue Y559 is the O-(3'-phospho-DNA)-tyrosine intermediate of the active site.

It belongs to the type IB topoisomerase family. Ca(2+) serves as cofactor. Mg(2+) is required as a cofactor.

The protein localises to the mitochondrion. The catalysed reaction is ATP-independent breakage of single-stranded DNA, followed by passage and rejoining.. Its function is as follows. Releases the supercoiling and torsional tension of DNA introduced during duplication of mitochondrial DNA by transiently cleaving and rejoining one strand of the DNA duplex. Introduces a single-strand break via transesterification at a target site in duplex DNA. The scissile phosphodiester is attacked by the catalytic tyrosine of the enzyme, resulting in the formation of a DNA-(3'-phosphotyrosyl)-enzyme intermediate and the expulsion of a 5'-OH DNA strand. The free DNA strand then rotates around the intact phosphodiester bond on the opposing strand, thus removing DNA supercoils. Finally, in the religation step, the DNA 5'-OH attacks the covalent intermediate to expel the active-site tyrosine and restore the DNA phosphodiester backbone. This is DNA topoisomerase I, mitochondrial (TOP1MT) from Pan troglodytes (Chimpanzee).